A 104-amino-acid chain; its full sequence is Protein MGF 110-2L (104 aa).

A signal peptide spans 1 to 31 (MRFFSYLGLLLAGLVSLQGFSTDNPLEEELR).

This sequence belongs to the asfivirus MGF 110 family.

Its function is as follows. Plays a role in virus cell tropism, and may be required for efficient virus replication in macrophages. This chain is Protein MGF 110-2L, found in African swine fever virus (isolate Warthog/Namibia/Wart80/1980) (ASFV).